Consider the following 586-residue polypeptide: Anaerobic glycerol-3-phosphate dehydrogenase subunit A1 (586 aa).

An FAD-binding site is contributed by 6–34 (SVLVIGGGSTGTGIARDLAMRGLDVTLVE). The tract at residues 559–586 (GGAVADGGRERAADRADDDALGGADGDN) is disordered. The segment covering 574-586 (ADDDALGGADGDN) has biased composition (acidic residues).

This sequence belongs to the FAD-dependent glycerol-3-phosphate dehydrogenase family. As to quaternary structure, composed of a catalytic GlpA/B dimer and of membrane bound GlpC. It depends on FAD as a cofactor. Requires FMN as cofactor.

Its subcellular location is the cell membrane. The enzyme catalyses a quinone + sn-glycerol 3-phosphate = dihydroxyacetone phosphate + a quinol. It participates in polyol metabolism; glycerol degradation via glycerol kinase pathway; glycerone phosphate from sn-glycerol 3-phosphate (anaerobic route): step 1/1. Up-regulated by glycerol and no inhibition by glucose. Its function is as follows. Conversion of glycerol 3-phosphate to dihydroxyacetone phosphate. Required for growth on glycerol and for glycerol metabolism. This chain is Anaerobic glycerol-3-phosphate dehydrogenase subunit A1 (gpdA1), found in Haloferax volcanii (strain ATCC 29605 / DSM 3757 / JCM 8879 / NBRC 14742 / NCIMB 2012 / VKM B-1768 / DS2) (Halobacterium volcanii).